Consider the following 183-residue polypeptide: Large ribosomal subunit protein uL6 (183 aa).

It belongs to the universal ribosomal protein uL6 family. As to quaternary structure, part of the 50S ribosomal subunit.

Functionally, this protein binds to the 23S rRNA, and is important in its secondary structure. It is located near the subunit interface in the base of the L7/L12 stalk, and near the tRNA binding site of the peptidyltransferase center. The protein is Large ribosomal subunit protein uL6 of Chlamydia felis (strain Fe/C-56) (Chlamydophila felis).